We begin with the raw amino-acid sequence, 151 residues long: NADH dehydrogenase [ubiquinone] 1 beta subcomplex subunit 11, mitochondrial (151 aa).

The transit peptide at 1 to 29 (MAARLLSLCARRLSVTAAVRGLPAAGVRW) directs the protein to the mitochondrion. A disordered region spans residues 39 to 62 (STVERKRQRQPTMHWQEDPESEDE). Residues 87–107 (VVFFFGFSIVLVLGTTFMAYL) traverse the membrane as a helical segment.

The protein belongs to the complex I NDUFB11 subunit family. Complex I is composed of 45 different subunits. Interacts with BCAP31.

It is found in the mitochondrion inner membrane. Accessory subunit of the mitochondrial membrane respiratory chain NADH dehydrogenase (Complex I), that is believed not to be involved in catalysis. Complex I functions in the transfer of electrons from NADH to the respiratory chain. The immediate electron acceptor for the enzyme is believed to be ubiquinone. The polypeptide is NADH dehydrogenase [ubiquinone] 1 beta subcomplex subunit 11, mitochondrial (NDUFB11) (Cricetulus griseus (Chinese hamster)).